Reading from the N-terminus, the 240-residue chain is Biosynthetic peptidoglycan transglycosylase (240 aa).

Residues 9-31 traverse the membrane as a helical segment; the sequence is FLNVVKWFAIASVLLVLLFRVVP.

It belongs to the glycosyltransferase 51 family.

It localises to the cell inner membrane. It catalyses the reaction [GlcNAc-(1-&gt;4)-Mur2Ac(oyl-L-Ala-gamma-D-Glu-L-Lys-D-Ala-D-Ala)](n)-di-trans,octa-cis-undecaprenyl diphosphate + beta-D-GlcNAc-(1-&gt;4)-Mur2Ac(oyl-L-Ala-gamma-D-Glu-L-Lys-D-Ala-D-Ala)-di-trans,octa-cis-undecaprenyl diphosphate = [GlcNAc-(1-&gt;4)-Mur2Ac(oyl-L-Ala-gamma-D-Glu-L-Lys-D-Ala-D-Ala)](n+1)-di-trans,octa-cis-undecaprenyl diphosphate + di-trans,octa-cis-undecaprenyl diphosphate + H(+). Its pathway is cell wall biogenesis; peptidoglycan biosynthesis. Its function is as follows. Peptidoglycan polymerase that catalyzes glycan chain elongation from lipid-linked precursors. This is Biosynthetic peptidoglycan transglycosylase from Pseudomonas fluorescens (strain SBW25).